Reading from the N-terminus, the 449-residue chain is 8-oxoguanine deaminase (449 aa).

2 residues coordinate Zn(2+): His-64 and His-66. Gln-69 is a binding site for substrate. Zn(2+) is bound at residue His-232. Substrate-binding residues include Glu-235 and His-269. Zn(2+) is bound by residues His-269 and Asp-320.

This sequence belongs to the metallo-dependent hydrolases superfamily. ATZ/TRZ family. Homodimer. Zn(2+) is required as a cofactor.

The enzyme catalyses 8-oxoguanine + H2O + H(+) = urate + NH4(+). It participates in purine metabolism. Functionally, specifically deaminates 8-Oxoguanine (8-oxoG) to uric acid. 8-oxoG is formed via the oxidation of guanine within DNA by reactive oxygen species and leads, if uncorrected, to the incorporation of 8-oxoG:A mismatches and eventually to G:C to T:A transversions. The sequence is that of 8-oxoguanine deaminase from Pseudomonas aeruginosa (strain ATCC 15692 / DSM 22644 / CIP 104116 / JCM 14847 / LMG 12228 / 1C / PRS 101 / PAO1).